The chain runs to 88 residues: Gene 86 protein (88 aa).

This chain is Gene 86 protein (86), found in Mycobacterium phage D29 (Mycobacteriophage D29).